A 341-amino-acid polypeptide reads, in one-letter code: L-threonine 3-dehydrogenase (341 aa).

Cys-38 contacts Zn(2+). Catalysis depends on charge relay system residues Thr-40 and His-43. 6 residues coordinate Zn(2+): His-63, Glu-64, Cys-93, Cys-96, Cys-99, and Cys-107. Residues Ile-175, Asp-195, Arg-200, 262-264, and 286-287 each bind NAD(+); these read LGI and IY.

This sequence belongs to the zinc-containing alcohol dehydrogenase family. As to quaternary structure, homotetramer. Zn(2+) serves as cofactor.

Its subcellular location is the cytoplasm. It catalyses the reaction L-threonine + NAD(+) = (2S)-2-amino-3-oxobutanoate + NADH + H(+). The protein operates within amino-acid degradation; L-threonine degradation via oxydo-reductase pathway; glycine from L-threonine: step 1/2. In terms of biological role, catalyzes the NAD(+)-dependent oxidation of L-threonine to 2-amino-3-ketobutyrate. The polypeptide is L-threonine 3-dehydrogenase (Proteus mirabilis (strain HI4320)).